The chain runs to 190 residues: Probable nicotinate-nucleotide adenylyltransferase (190 aa).

The protein belongs to the NadD family.

It catalyses the reaction nicotinate beta-D-ribonucleotide + ATP + H(+) = deamido-NAD(+) + diphosphate. It participates in cofactor biosynthesis; NAD(+) biosynthesis; deamido-NAD(+) from nicotinate D-ribonucleotide: step 1/1. Functionally, catalyzes the reversible adenylation of nicotinate mononucleotide (NaMN) to nicotinic acid adenine dinucleotide (NaAD). This is Probable nicotinate-nucleotide adenylyltransferase from Staphylococcus saprophyticus subsp. saprophyticus (strain ATCC 15305 / DSM 20229 / NCIMB 8711 / NCTC 7292 / S-41).